Consider the following 756-residue polypeptide: Polyribonucleotide nucleotidyltransferase (756 aa).

2 residues coordinate Mg(2+): Asp-492 and Asp-498. Residues 559–618 (PQHAEVFVNPDVIRIIIGPGGKNIKAITAATGASIDIEDSGKVSIFAPTYEAMEMAREMV) form the KH domain. Residues 628–702 (GKNYVGKVRK…SRKAVLLEEQ (75 aa)) enclose the S1 motif domain. Positions 703 to 756 (GVEWNPEDTARPSGPPRDRGDRGDRGGRGDRGGDRRGGDRGGRGGDRGRGGDRR) are disordered. The span at 718 to 756 (PRDRGDRGDRGGRGDRGGDRRGGDRGGRGGDRGRGGDRR) shows a compositional bias: basic and acidic residues.

The protein belongs to the polyribonucleotide nucleotidyltransferase family. Requires Mg(2+) as cofactor.

It localises to the cytoplasm. The enzyme catalyses RNA(n+1) + phosphate = RNA(n) + a ribonucleoside 5'-diphosphate. In terms of biological role, involved in mRNA degradation. Catalyzes the phosphorolysis of single-stranded polyribonucleotides processively in the 3'- to 5'-direction. The polypeptide is Polyribonucleotide nucleotidyltransferase (Nitratidesulfovibrio vulgaris (strain DSM 19637 / Miyazaki F) (Desulfovibrio vulgaris)).